The sequence spans 729 residues: Phosphoribosylformylglycinamidine synthase subunit PurL (729 aa).

Residue H54 is part of the active site. Positions 57 and 96 each coordinate ATP. E98 contributes to the Mg(2+) binding site. Residues 99-102 (SHNH) and R121 contribute to the substrate site. H100 acts as the Proton acceptor in catalysis. Position 122 (D122) interacts with Mg(2+). Q245 serves as a coordination point for substrate. D273 provides a ligand contact to Mg(2+). Residue 317 to 319 (ETQ) coordinates substrate. 2 residues coordinate ATP: D495 and G532. N533 contributes to the Mg(2+) binding site. Residue S535 coordinates substrate.

Belongs to the FGAMS family. Monomer. Part of the FGAM synthase complex composed of 1 PurL, 1 PurQ and 2 PurS subunits.

Its subcellular location is the cytoplasm. The catalysed reaction is N(2)-formyl-N(1)-(5-phospho-beta-D-ribosyl)glycinamide + L-glutamine + ATP + H2O = 2-formamido-N(1)-(5-O-phospho-beta-D-ribosyl)acetamidine + L-glutamate + ADP + phosphate + H(+). It participates in purine metabolism; IMP biosynthesis via de novo pathway; 5-amino-1-(5-phospho-D-ribosyl)imidazole from N(2)-formyl-N(1)-(5-phospho-D-ribosyl)glycinamide: step 1/2. In terms of biological role, part of the phosphoribosylformylglycinamidine synthase complex involved in the purines biosynthetic pathway. Catalyzes the ATP-dependent conversion of formylglycinamide ribonucleotide (FGAR) and glutamine to yield formylglycinamidine ribonucleotide (FGAM) and glutamate. The FGAM synthase complex is composed of three subunits. PurQ produces an ammonia molecule by converting glutamine to glutamate. PurL transfers the ammonia molecule to FGAR to form FGAM in an ATP-dependent manner. PurS interacts with PurQ and PurL and is thought to assist in the transfer of the ammonia molecule from PurQ to PurL. In Staphylococcus epidermidis (strain ATCC 35984 / DSM 28319 / BCRC 17069 / CCUG 31568 / BM 3577 / RP62A), this protein is Phosphoribosylformylglycinamidine synthase subunit PurL.